The sequence spans 355 residues: Uroporphyrinogen decarboxylase (355 aa).

Residues 27–31, Asp77, Tyr154, Thr209, and His327 each bind substrate; that span reads RQAGR.

It belongs to the uroporphyrinogen decarboxylase family. Homodimer.

The protein localises to the cytoplasm. It catalyses the reaction uroporphyrinogen III + 4 H(+) = coproporphyrinogen III + 4 CO2. It functions in the pathway porphyrin-containing compound metabolism; protoporphyrin-IX biosynthesis; coproporphyrinogen-III from 5-aminolevulinate: step 4/4. Functionally, catalyzes the decarboxylation of four acetate groups of uroporphyrinogen-III to yield coproporphyrinogen-III. This is Uroporphyrinogen decarboxylase from Yersinia enterocolitica serotype O:8 / biotype 1B (strain NCTC 13174 / 8081).